Consider the following 440-residue polypeptide: Aclacinomycin-T 2-deoxy-L-fucose transferase (440 aa).

It catalyses the reaction dTDP-2-deoxy-beta-L-fucose + aclacinomycin T = aclacinomycin S + dTDP + H(+). In terms of biological role, involved in the biosynthesis of the trisaccharide moiety characteristic of the antitumor drug aclacinomycins. In the first reaction, AknK catalyzes the transfer of 2-deoxy-beta-L-fucose from the activated donor dTDP-2-deoxy-beta-L-fucose to the mono-glycosylated aclacinomycin T (rhodosaminyl aklavinone), forming the di-glycosylated aclacinomycin S (L-2-deoxyfucosyl-L-rhodosaminyl aklavinone). It can also catalyze the addition of an alternate dTDP-L-sugar, dTDP-L-daunosamine, to aclacinomycin T and the addition of 2-deoxy-beta-L-fucose to the mono-glycosylated aglycones (monoglycosylated anthracyclines) such as daunomycin (daunorubicin), adriamycin (doxorubicin) and idarubicin. In vitro, AknK also catalyzes the addition of a second L-2-deoxyfucosyl moiety from dTDP-2-deoxy-beta-L-fucose, albeit with reduced activity, to the natural disaccharide chain of aclacinomycin S to produce L-deoxyfucosyl-L-deoxyfucosyl-L-rhodosaminyl aklavinone (2-deoxy-alpha-D-fucosyl-aclacinomycin S), a variant of the natural aclacinomycin A. The protein is Aclacinomycin-T 2-deoxy-L-fucose transferase of Streptomyces galilaeus.